Consider the following 372-residue polypeptide: Glutamate 5-kinase (372 aa).

Lysine 14 serves as a coordination point for ATP. Residues serine 54, aspartate 141, and asparagine 153 each coordinate substrate. Residue threonine 173 to aspartate 174 coordinates ATP. The 79-residue stretch at arginine 280–valine 358 folds into the PUA domain.

Belongs to the glutamate 5-kinase family.

The protein localises to the cytoplasm. It carries out the reaction L-glutamate + ATP = L-glutamyl 5-phosphate + ADP. Its pathway is amino-acid biosynthesis; L-proline biosynthesis; L-glutamate 5-semialdehyde from L-glutamate: step 1/2. Functionally, catalyzes the transfer of a phosphate group to glutamate to form L-glutamate 5-phosphate. The chain is Glutamate 5-kinase from Ectopseudomonas mendocina (strain ymp) (Pseudomonas mendocina).